The sequence spans 934 residues: Serine/threonine-protein kinase atg1 (934 aa).

One can recognise a Protein kinase domain in the interval 22–328; it reads YTRLDEIGRG…SDFFDCDTIT (307 aa). Residues 28 to 36 and K51 contribute to the ATP site; that span reads IGRGSFATV. Residue D165 is the Proton acceptor of the active site. Disordered regions lie at residues 335 to 432, 462 to 481, 531 to 580, 684 to 703, 800 to 822, and 878 to 900; these read IADD…PRRP, RNTY…TKEE, RRPG…YGQS, TDPS…TDLT, RLPP…GSGA, and EEEE…RRDG. A compositionally biased stretch (polar residues) spans 340–368; that stretch reads PSTSRRSSVAVNTSGSTSRPQSRTGSRTP. Residues 371–386 are compositionally biased toward basic and acidic residues; it reads MKREKDASYPGKKDDQ. Positions 538 to 550 are enriched in low complexity; that stretch reads SSTATATSPLATT. A compositionally biased stretch (basic and acidic residues) spans 561–577; that stretch reads ARADSTHTRQGSYERRY.

The protein belongs to the protein kinase superfamily. Ser/Thr protein kinase family. APG1/unc-51/ULK1 subfamily. In terms of assembly, homodimer. Forms a ternary complex with ATG13 and ATG17.

The protein resides in the cytoplasm. Its subcellular location is the preautophagosomal structure membrane. The enzyme catalyses L-seryl-[protein] + ATP = O-phospho-L-seryl-[protein] + ADP + H(+). It catalyses the reaction L-threonyl-[protein] + ATP = O-phospho-L-threonyl-[protein] + ADP + H(+). In terms of biological role, serine/threonine protein kinase involved in the cytoplasm to vacuole transport (Cvt) and found to be essential in autophagy, where it is required for the formation of autophagosomes. Involved in the clearance of protein aggregates which cannot be efficiently cleared by the proteasome. Required for selective autophagic degradation of the nucleus (nucleophagy) as well as for mitophagy which contributes to regulate mitochondrial quantity and quality by eliminating the mitochondria to a basal level to fulfill cellular energy requirements and preventing excess ROS production. Also involved in endoplasmic reticulum-specific autophagic process, in selective removal of ER-associated degradation (ERAD) substrates. Plays a key role in ATG9 and ATG23 cycling through the pre-autophagosomal structure and is necessary to promote ATG18 binding to ATG9 through phosphorylation of ATG9. Catalyzes phosphorylation of ATG4, decreasing the interaction between ATG4 and ATG8 and impairing deconjugation of PE-conjugated forms of ATG8. Required for conidiation and development of aerial hyphae. This is Serine/threonine-protein kinase atg1 from Aspergillus oryzae (strain ATCC 42149 / RIB 40) (Yellow koji mold).